The primary structure comprises 897 residues: Schlafen family member 13 (897 aa).

A n'-domain region region spans residues 2 to 355 (EANHCSLGVY…WVEKMMDADP (354 aa)). Catalysis depends on residues E208 and E213. Positions 284, 286, and 321 each coordinate Zn(2+). 599–606 (GLPGSGKT) is a binding site for ATP.

This sequence belongs to the Schlafen family. Subgroup III subfamily. Requires Mg(2+) as cofactor.

Its subcellular location is the cytoplasm. Functionally, endoribonuclease that cleaves tRNAs and rRNAs. Cleaves tRNAs 11 nucleotides from the 3'-terminus at the acceptor stem. Does not act on tRNA(Sec). Able to restrict HIV-1 virus replication; ability to inhibit HIV-1 replication is dependent on endoribonuclease activity. This is Schlafen family member 13 from Homo sapiens (Human).